We begin with the raw amino-acid sequence, 305 residues long: Olfactory receptor 4F5 (305 aa).

Residues 1–18 (MVTEFIFLGLSDSQELQT) are Extracellular-facing. A helical transmembrane segment spans residues 19–42 (FLFMLFFVFYGGIVFGNLLIVITV). Residues 43-50 (VSDSHLHS) lie on the Cytoplasmic side of the membrane. Residues 51–72 (PMYFLLANLSLIDLSLSSVTAP) traverse the membrane as a helical segment. At 73–93 (KMITDFFSQRKVISFKGCLVQ) the chain is on the extracellular side. The cysteines at positions 90 and 182 are disulfide-linked. The chain crosses the membrane as a helical span at residues 94–113 (IFLLHFFGGSEMVILIAMGF). Over 114-132 (DRYIAICKPLHYTTIMCGN) the chain is Cytoplasmic. The chain crosses the membrane as a helical span at residues 133–151 (ACVGIMAVTWGIGFLHSVS). Residues 152 to 188 (QLAFAVHLLFCGPNEVDSFYCDLPRVIKLACTDTYRL) lie on the Extracellular side of the membrane. Residues 189 to 212 (DIMVIANSGVLTVCSFVLLIISYT) traverse the membrane as a helical segment. The Cytoplasmic segment spans residues 213-228 (IILMTIQHRPLDKSSK). A helical membrane pass occupies residues 229-251 (ALSTLTAHITVVLLFFGPCVFIY). The Extracellular portion of the chain corresponds to 252 to 262 (AWPFPIKSLDK). A helical membrane pass occupies residues 263 to 282 (FLAVFYSVITPLLNPIIYTL). At 283–305 (RNKDMKTAIRQLRKWDAHSSVKF) the chain is on the cytoplasmic side.

It belongs to the G-protein coupled receptor 1 family.

It localises to the cell membrane. Odorant receptor. In Homo sapiens (Human), this protein is Olfactory receptor 4F5 (OR4F5).